Here is a 324-residue protein sequence, read N- to C-terminus: Ribosomal RNA small subunit methyltransferase H (324 aa).

S-adenosyl-L-methionine is bound by residues 40–42 (AGH), Asp60, Leu94, Asp108, and His115. The interval 301-324 (EEMKVNTRSRSAKLRVAERTGEDG) is disordered. A compositionally biased stretch (basic and acidic residues) spans 315-324 (RVAERTGEDG).

The protein belongs to the methyltransferase superfamily. RsmH family.

Its subcellular location is the cytoplasm. It catalyses the reaction cytidine(1402) in 16S rRNA + S-adenosyl-L-methionine = N(4)-methylcytidine(1402) in 16S rRNA + S-adenosyl-L-homocysteine + H(+). Specifically methylates the N4 position of cytidine in position 1402 (C1402) of 16S rRNA. The protein is Ribosomal RNA small subunit methyltransferase H of Maridesulfovibrio salexigens (strain ATCC 14822 / DSM 2638 / NCIMB 8403 / VKM B-1763) (Desulfovibrio salexigens).